Here is a 612-residue protein sequence, read N- to C-terminus: 1,8-cineole synthase, chloroplastic (612 aa).

A chloroplast-targeting transit peptide spans 1–52 (MALVSGAPLASRSCLNKSLISSTHELKPLRRTILPTLRWKSATPSINMCLTT). Residues Asp363, Asp367, and Asp515 each contribute to the Mg(2+) site. Residues 363–367 (DDIYD) carry the DDXXD motif motif.

Belongs to the terpene synthase family. Tpsd subfamily. Mg(2+) is required as a cofactor. Mn(2+) serves as cofactor.

It localises to the plastid. Its subcellular location is the chloroplast. The catalysed reaction is (2E)-geranyl diphosphate + H2O = 1,8-cineole + diphosphate. It participates in terpene metabolism; oleoresin biosynthesis. Functionally, terpene synthase (TPS) involved in the biosynthesis of monoterpene natural products included in conifer oleoresin secretions and volatile emissions; these compounds contribute to biotic and abiotic stress defense against herbivores and pathogens. Catalyzes the conversion of (2E)-geranyl diphosphate (GPP) to 1,8-cineole. In Picea engelmannii x Picea glauca (Hybrid white spruce), this protein is 1,8-cineole synthase, chloroplastic.